Reading from the N-terminus, the 320-residue chain is Ribosomal RNA small subunit methyltransferase H (320 aa).

S-adenosyl-L-methionine-binding positions include 36–38 (GGH), Asp56, Phe82, Asp103, and Gln110.

It belongs to the methyltransferase superfamily. RsmH family.

It is found in the cytoplasm. It catalyses the reaction cytidine(1402) in 16S rRNA + S-adenosyl-L-methionine = N(4)-methylcytidine(1402) in 16S rRNA + S-adenosyl-L-homocysteine + H(+). In terms of biological role, specifically methylates the N4 position of cytidine in position 1402 (C1402) of 16S rRNA. This chain is Ribosomal RNA small subunit methyltransferase H, found in Chromobacterium violaceum (strain ATCC 12472 / DSM 30191 / JCM 1249 / CCUG 213 / NBRC 12614 / NCIMB 9131 / NCTC 9757 / MK).